The primary structure comprises 391 residues: Deoxyguanosinetriphosphate triphosphohydrolase-like protein (391 aa).

In terms of domain architecture, HD spans 62 to 198 (RLTHSLEVST…ASLADDISYI (137 aa)).

Belongs to the dGTPase family. Type 2 subfamily.

The protein is Deoxyguanosinetriphosphate triphosphohydrolase-like protein of Rickettsia akari (strain Hartford).